A 278-amino-acid polypeptide reads, in one-letter code: HTH-type transcriptional activator RhaS (278 aa).

Positions 174-272 constitute an HTH araC/xylS-type domain; sequence NLLLAWLEDH…NWSPRDIRQG (99 aa). 2 DNA-binding regions (H-T-H motif) span residues 191–212 and 239–262; these read DAVA…KQQT and VTDI…RREF.

In terms of assembly, binds DNA as a dimer.

It is found in the cytoplasm. Functionally, activates expression of the rhaBAD and rhaT operons. This is HTH-type transcriptional activator RhaS from Escherichia coli (strain SMS-3-5 / SECEC).